Reading from the N-terminus, the 393-residue chain is (S)-mandelate dehydrogenase (393 aa).

One can recognise an FMN hydroxy acid dehydrogenase domain in the interval 1 to 377 (MSQNLFNVED…SPDYLQNEGV (377 aa)). Tyrosine 26 is a (S)-mandelate binding site. FMN is bound by residues 79–81 (PTG), serine 108, and glutamine 129. Tyrosine 131 contributes to the (S)-mandelate binding site. Threonine 156 is a binding site for FMN. Arginine 165 contributes to the (S)-mandelate binding site. Lysine 250 lines the FMN pocket. (S)-mandelate-binding residues include histidine 274 and arginine 277. The active-site Proton acceptor is histidine 274. Residues 303-307 (DSGFR) and 326-327 (GR) contribute to the FMN site.

The protein belongs to the FMN-dependent alpha-hydroxy acid dehydrogenase family. Homotetramer. FMN is required as a cofactor.

The protein resides in the cell inner membrane. It catalyses the reaction (S)-mandelate + A = phenylglyoxylate + AH2. It participates in aromatic compound metabolism; (R)-mandelate degradation; benzoate from (R)-mandelate: step 2/4. In terms of biological role, catalyzes the dehydrogenation of (S)-mandelate to phenylglyoxylate (benzoylformate). Is likely involved in the utilization of mandelate as a sole source of carbon and energy for growth. Active in vitro with the artificial electron acceptors 2,6-dichlorophenolindophenol (DCPIP) or ferricyanide, but in vivo most likely transfer the electron pair from the reduced flavin to a component of the electron transport chain in the membrane, possibly a quinone. Shows very low activity with oxygen as the electron acceptor, and also with 3-indolelactate and medium chain 2-hydroxyacids as substrates. The polypeptide is (S)-mandelate dehydrogenase (Pseudomonas putida (Arthrobacter siderocapsulatus)).